A 308-amino-acid chain; its full sequence is Protoheme IX farnesyltransferase (308 aa).

A run of 9 helical transmembrane segments spans residues Val31–Phe51, Leu60–Ile80, Ala110–Leu130, Thr131–Ser151, Val157–Val177, Ala185–Ile205, Ile232–Pro252, Ile253–Arg273, and Phe285–Phe305.

Belongs to the UbiA prenyltransferase family. Protoheme IX farnesyltransferase subfamily. Interacts with CtaA.

It is found in the cell membrane. It catalyses the reaction heme b + (2E,6E)-farnesyl diphosphate + H2O = Fe(II)-heme o + diphosphate. It participates in porphyrin-containing compound metabolism; heme O biosynthesis; heme O from protoheme: step 1/1. Its function is as follows. Converts heme B (protoheme IX) to heme O by substitution of the vinyl group on carbon 2 of heme B porphyrin ring with a hydroxyethyl farnesyl side group. The chain is Protoheme IX farnesyltransferase from Bacillus licheniformis (strain ATCC 14580 / DSM 13 / JCM 2505 / CCUG 7422 / NBRC 12200 / NCIMB 9375 / NCTC 10341 / NRRL NRS-1264 / Gibson 46).